The sequence spans 434 residues: Monodehydroascorbate reductase 1, peroxisomal (434 aa).

FAD is bound by residues 13–16, glutamate 40, arginine 47, lysine 52, isoleucine 95, and 146–147; these read GGVS and RE. Residues 171–177, glutamate 195, arginine 201, and glycine 260 each bind NAD(+); that span reads GGYIGLE. NADP(+) is bound at residue 173–177; sequence YIGLE. Arginine 201 and glycine 260 together coordinate NADP(+). Residue aspartate 297 coordinates FAD. 313–314 contributes to the NAD(+) binding site; that stretch reads EH. 313–314 is a binding site for NADP(+); sequence EH. Valine 315 is an FAD binding site. Arginine 319 contributes to the L-ascorbate binding site. Position 348 (tyrosine 348) interacts with FAD. Tyrosine 348 is an NAD(+) binding site. Tyrosine 348 is an NADP(+) binding site. An L-ascorbate-binding site is contributed by arginine 350. Serine 416 is subject to Phosphoserine.

It belongs to the FAD-dependent oxidoreductase family. FAD serves as cofactor.

It is found in the peroxisome matrix. The catalysed reaction is 2 monodehydro-L-ascorbate radical + NADH + H(+) = 2 L-ascorbate + NAD(+). Functionally, catalyzes the conversion of monodehydroascorbate to ascorbate, oxidizing NADH in the process. In Arabidopsis thaliana (Mouse-ear cress), this protein is Monodehydroascorbate reductase 1, peroxisomal.